We begin with the raw amino-acid sequence, 63 residues long: Large ribosomal subunit protein bL28 (63 aa).

This sequence belongs to the bacterial ribosomal protein bL28 family.

The chain is Large ribosomal subunit protein bL28 from Clostridium botulinum (strain Alaska E43 / Type E3).